Reading from the N-terminus, the 212-residue chain is Peptide methionine sulfoxide reductase MsrA (212 aa).

Cys52 is a catalytic residue.

Belongs to the MsrA Met sulfoxide reductase family.

It catalyses the reaction L-methionyl-[protein] + [thioredoxin]-disulfide + H2O = L-methionyl-(S)-S-oxide-[protein] + [thioredoxin]-dithiol. It carries out the reaction [thioredoxin]-disulfide + L-methionine + H2O = L-methionine (S)-S-oxide + [thioredoxin]-dithiol. Has an important function as a repair enzyme for proteins that have been inactivated by oxidation. Catalyzes the reversible oxidation-reduction of methionine sulfoxide in proteins to methionine. In Salmonella arizonae (strain ATCC BAA-731 / CDC346-86 / RSK2980), this protein is Peptide methionine sulfoxide reductase MsrA.